A 266-amino-acid polypeptide reads, in one-letter code: F-actin-capping protein subunit beta (266 aa).

It belongs to the F-actin-capping protein beta subunit family. Component of the F-actin capping complex, composed of a heterodimer of an alpha and a beta subunit.

The protein localises to the cytoplasm. Its subcellular location is the cytoskeleton. It localises to the actin patch. Functionally, F-actin-capping proteins bind in a Ca(2+)-independent manner to the fast growing ends of actin filaments (barbed end) thereby blocking the exchange of subunits at these ends. Unlike other capping proteins (such as gelsolin and severin), these proteins do not sever actin filaments. This is F-actin-capping protein subunit beta (cap2) from Emericella nidulans (strain FGSC A4 / ATCC 38163 / CBS 112.46 / NRRL 194 / M139) (Aspergillus nidulans).